A 296-amino-acid polypeptide reads, in one-letter code: Protein RarD (296 aa).

At 1 to 11 (MDAKQTRQGVL) the chain is on the cytoplasmic side. Residues 12–34 (LALAAYFIWGIAPAYFKLIYYVP) form a helical membrane-spanning segment. Positions 18–145 (FIWGIAPAYF…AICGVLVQLW (128 aa)) constitute an EamA domain. Residues 35 to 37 (ADE) are Periplasmic-facing. The helical transmembrane segment at 38–60 (ILTHRVIWSFFFMVVLMSICRQW) threads the bilayer. The Cytoplasmic portion of the chain corresponds to 61–72 (SYLKTLIQTPQK). A helical transmembrane segment spans residues 73–95 (IFMLAVSAVLIGGNWLLFIWAVN). At 96-99 (NHHM) the chain is on the periplasmic side. A helical membrane pass occupies residues 100–122 (LEASLGYFINPLVNIVLGMIFLG). The Cytoplasmic segment spans residues 123 to 128 (ERFRRM). The helical transmembrane segment at 129–146 (QWLAVILAICGVLVQLWT) threads the bilayer. Residues 147-149 (FGS) lie on the Periplasmic side of the membrane. The chain crosses the membrane as a helical span at residues 150–167 (LPIIALGLAFSFAFYGLV). Over 168-179 (RKKIAVEAQTGM) the chain is Cytoplasmic. A helical membrane pass occupies residues 180–197 (LIETMWLLPVAAIYLFAI). The Periplasmic segment spans residues 198–211 (ADSSTSHMGQNPMS). A helical transmembrane segment spans residues 212–234 (LNLLLIAAGIVTTVPLLCFTAAA). Residues 235-238 (TRLR) are Cytoplasmic-facing. Residues 239 to 261 (LSTLGFFQYIGPTLMFLLAVTFY) traverse the membrane as a helical segment. The Periplasmic segment spans residues 262–270 (GEKPGADKM). Residues 271 to 290 (VTFAFIWVALAIFVMDAIYT) traverse the membrane as a helical segment. Topologically, residues 291 to 296 (QRRTSK) are cytoplasmic.

It belongs to the EamA transporter family.

It localises to the cell inner membrane. The chain is Protein RarD (rarD) from Escherichia coli (strain K12).